A 31-amino-acid polypeptide reads, in one-letter code: Cyclotide psybry B (31 aa).

The segment at residues 1–31 (GFNPCGETCWNKPTCHAPGCTCSIANICVRN) is a cross-link (cyclopeptide (Gly-Asn)). Intrachain disulfides connect Cys5–Cys20, Cys9–Cys22, and Cys15–Cys28.

In terms of processing, this is a cyclic peptide.

Probably participates in a plant defense mechanism. The polypeptide is Cyclotide psybry B (Psychotria brachyceras).